A 420-amino-acid chain; its full sequence is Histidine--tRNA ligase (420 aa).

The protein belongs to the class-II aminoacyl-tRNA synthetase family. Homodimer.

The protein localises to the cytoplasm. It carries out the reaction tRNA(His) + L-histidine + ATP = L-histidyl-tRNA(His) + AMP + diphosphate + H(+). This chain is Histidine--tRNA ligase, found in Staphylococcus saprophyticus subsp. saprophyticus (strain ATCC 15305 / DSM 20229 / NCIMB 8711 / NCTC 7292 / S-41).